Here is a 500-residue protein sequence, read N- to C-terminus: Cytochrome P450 6B4 (500 aa).

Cys-443 provides a ligand contact to heme.

The protein belongs to the cytochrome P450 family. Requires heme as cofactor.

Its subcellular location is the endoplasmic reticulum membrane. The protein localises to the microsome membrane. The enzyme catalyses an organic molecule + reduced [NADPH--hemoprotein reductase] + O2 = an alcohol + oxidized [NADPH--hemoprotein reductase] + H2O + H(+). In terms of biological role, enables the insect to feed on furanocoumarin-producing plants and evolved as an adaptation for detoxification of xanthotoxin and other furanocoumarins. This isozyme metabolizes isopimpinellin, imperatorin, and bergapten at high rates, xanthotoxin and psoralen at intermediate rates and angelicin, sphondin, and trioxsalen only at very low rates. The sequence is that of Cytochrome P450 6B4 (CYP6B4) from Papilio glaucus (Eastern tiger swallowtail butterfly).